The primary structure comprises 502 residues: Probable glycerol kinase (502 aa).

Thr-11 contributes to the substrate binding site. Position 15 (Arg-15) interacts with ATP. Arg-85, Tyr-140, and Asp-246 together coordinate substrate. ATP-binding positions include Thr-268, Gly-313, and 416-420 (GMIAN).

Belongs to the FGGY kinase family.

It carries out the reaction glycerol + ATP = sn-glycerol 3-phosphate + ADP + H(+). Its pathway is polyol metabolism; glycerol degradation via glycerol kinase pathway; sn-glycerol 3-phosphate from glycerol: step 1/1. This chain is Probable glycerol kinase, found in Caenorhabditis elegans.